A 239-amino-acid polypeptide reads, in one-letter code: ATP synthase subunit b (239 aa).

Low complexity predominate over residues 1 to 22 (MYAQEAQQKPEAQQSAPAAEQP). The interval 1–64 (MYAQEAQQKP…GEEEAGEHME (64 aa)) is disordered. 2 stretches are compositionally biased toward basic and acidic residues: residues 23 to 33 (KPAEEQAKPEQ) and 45 to 64 (ELSEASHAAEGEEEAGEHME). The chain crosses the membrane as a helical span at residues 85-105 (SYWIAMAFNFAIVFALLGWAM).

It belongs to the ATPase B chain family. F-type ATPases have 2 components, F(1) - the catalytic core - and F(0) - the membrane proton channel. F(1) has five subunits: alpha(3), beta(3), gamma(1), delta(1), epsilon(1). F(0) has three main subunits: a(1), b(2) and c(10-14). The alpha and beta chains form an alternating ring which encloses part of the gamma chain. F(1) is attached to F(0) by a central stalk formed by the gamma and epsilon chains, while a peripheral stalk is formed by the delta and b chains.

Its subcellular location is the cell inner membrane. Its function is as follows. F(1)F(0) ATP synthase produces ATP from ADP in the presence of a proton or sodium gradient. F-type ATPases consist of two structural domains, F(1) containing the extramembraneous catalytic core and F(0) containing the membrane proton channel, linked together by a central stalk and a peripheral stalk. During catalysis, ATP synthesis in the catalytic domain of F(1) is coupled via a rotary mechanism of the central stalk subunits to proton translocation. Component of the F(0) channel, it forms part of the peripheral stalk, linking F(1) to F(0). The chain is ATP synthase subunit b from Koribacter versatilis (strain Ellin345).